We begin with the raw amino-acid sequence, 193 residues long: Probable GTP-binding protein EngB (193 aa).

An EngB-type G domain is found at 22-193 (QLPEFALAGR…EAWGALQKWM (172 aa)). GTP contacts are provided by residues 30–37 (GRSNVGKS), 57–61 (GKTQT), 75–78 (DVPG), 142–145 (TKAD), and 174–176 (FSA). Mg(2+)-binding residues include Ser37 and Thr59.

It belongs to the TRAFAC class TrmE-Era-EngA-EngB-Septin-like GTPase superfamily. EngB GTPase family. Mg(2+) serves as cofactor.

In terms of biological role, necessary for normal cell division and for the maintenance of normal septation. The protein is Probable GTP-binding protein EngB of Anoxybacillus flavithermus (strain DSM 21510 / WK1).